The primary structure comprises 379 residues: ATP phosphoribosyltransferase regulatory subunit (379 aa).

The protein belongs to the class-II aminoacyl-tRNA synthetase family. HisZ subfamily. Heteromultimer composed of HisG and HisZ subunits.

It is found in the cytoplasm. The protein operates within amino-acid biosynthesis; L-histidine biosynthesis; L-histidine from 5-phospho-alpha-D-ribose 1-diphosphate: step 1/9. In terms of biological role, required for the first step of histidine biosynthesis. May allow the feedback regulation of ATP phosphoribosyltransferase activity by histidine. The chain is ATP phosphoribosyltransferase regulatory subunit from Paramagnetospirillum magneticum (strain ATCC 700264 / AMB-1) (Magnetospirillum magneticum).